Reading from the N-terminus, the 193-residue chain is Ectoine TRAP transporter small permease protein TeaB (193 aa).

The next 4 membrane-spanning stretches (helical) occupy residues 33–55 (ILAL…RFAL), 65–82 (VNRI…GYAA), 103–125 (RALM…YYSV), and 145–167 (IFII…LFTA).

This sequence belongs to the TRAP transporter small permease family. The complex comprises the extracytoplasmic solute receptor protein TeaA, and the two transmembrane proteins TeaB and TeaC.

The protein localises to the cell inner membrane. Part of the tripartite ATP-independent periplasmic (TRAP) transport system TeaABC involved in the uptake of ectoine and hydroxyectoine in response to osmotic upshock. Probably functions as a recovery system for synthesized ectoine that leaks out of the cell. The protein is Ectoine TRAP transporter small permease protein TeaB (teaB) of Halomonas elongata (strain ATCC 33173 / DSM 2581 / NBRC 15536 / NCIMB 2198 / 1H9).